Reading from the N-terminus, the 239-residue chain is tRNA (guanine-N(7)-)-methyltransferase (239 aa).

S-adenosyl-L-methionine-binding residues include glutamate 69, glutamate 94, aspartate 121, and aspartate 144. Aspartate 144 is an active-site residue. A substrate-binding site is contributed by lysine 148. The interval arginine 150–arginine 155 is interaction with RNA. Residues aspartate 180 and threonine 217–glutamate 220 each bind substrate.

Belongs to the class I-like SAM-binding methyltransferase superfamily. TrmB family. In terms of assembly, monomer.

The catalysed reaction is guanosine(46) in tRNA + S-adenosyl-L-methionine = N(7)-methylguanosine(46) in tRNA + S-adenosyl-L-homocysteine. The protein operates within tRNA modification; N(7)-methylguanine-tRNA biosynthesis. In terms of biological role, catalyzes the formation of N(7)-methylguanine at position 46 (m7G46) in tRNA. The chain is tRNA (guanine-N(7)-)-methyltransferase from Salmonella typhimurium (strain LT2 / SGSC1412 / ATCC 700720).